The primary structure comprises 314 residues: Olfactory receptor 9I1 (314 aa).

Over 1 to 25 the chain is Extracellular; that stretch reads MAKNNLTRVTEFILMGFMDHPKLEI. N-linked (GlcNAc...) asparagine glycosylation is present at Asn5. A helical membrane pass occupies residues 26–46; that stretch reads PLFLVFLSFYLVTLLGNVGMI. At 47–54 the chain is on the cytoplasmic side; that stretch reads MLIQVDVK. Residues 55-75 form a helical membrane-spanning segment; sequence LYTPMYFFLSHLSLLDACYTS. The Extracellular segment spans residues 76–99; that stretch reads VITPQILATLATGKTVISYGHCAA. Cys97 and Cys189 are oxidised to a cystine. The helical transmembrane segment at 100–120 threads the bilayer; the sequence is QFFLFTICAGTECFLLAVMAY. Over 121–139 the chain is Cytoplasmic; sequence DRYAAIRNPLLYTVAMNPR. The chain crosses the membrane as a helical span at residues 140–160; it reads LCWSLVVGAYVCGVSGAILRT. The Extracellular segment spans residues 161–197; it reads TCTFTLSFCKDNQINFFFCDLPPLLKLACSDTANIEI. The helical transmembrane segment at 198–217 threads the bilayer; sequence VIIFFGNFVILANASVILIS. Residues 218–237 are Cytoplasmic-facing; sequence YLLIIKTILKVKSSGGRAKT. Residues 238-258 form a helical membrane-spanning segment; that stretch reads FSTCASHITAVALFFGALIFM. At 259-271 the chain is on the extracellular side; that stretch reads YLQSGSGKSLEED. A helical membrane pass occupies residues 272 to 292; it reads KVVSVFYTVVIPMLNPLIYSL. At 293–314 the chain is on the cytoplasmic side; it reads RNKDVKDAFRKVARRLQVSLSM.

Belongs to the G-protein coupled receptor 1 family.

The protein localises to the cell membrane. Its function is as follows. Odorant receptor. The sequence is that of Olfactory receptor 9I1 (OR9I1) from Homo sapiens (Human).